A 486-amino-acid polypeptide reads, in one-letter code: Protein nucleotidyltransferase YdiU (486 aa).

ATP-binding residues include G90, G92, R93, K113, D125, G126, R176, and R183. D252 serves as the catalytic Proton acceptor. Mg(2+) contacts are provided by N253 and D262. D262 contributes to the ATP binding site.

The protein belongs to the SELO family. Requires Mg(2+) as cofactor. Mn(2+) serves as cofactor.

It carries out the reaction L-seryl-[protein] + ATP = 3-O-(5'-adenylyl)-L-seryl-[protein] + diphosphate. The catalysed reaction is L-threonyl-[protein] + ATP = 3-O-(5'-adenylyl)-L-threonyl-[protein] + diphosphate. The enzyme catalyses L-tyrosyl-[protein] + ATP = O-(5'-adenylyl)-L-tyrosyl-[protein] + diphosphate. It catalyses the reaction L-histidyl-[protein] + UTP = N(tele)-(5'-uridylyl)-L-histidyl-[protein] + diphosphate. It carries out the reaction L-seryl-[protein] + UTP = O-(5'-uridylyl)-L-seryl-[protein] + diphosphate. The catalysed reaction is L-tyrosyl-[protein] + UTP = O-(5'-uridylyl)-L-tyrosyl-[protein] + diphosphate. Its function is as follows. Nucleotidyltransferase involved in the post-translational modification of proteins. It can catalyze the addition of adenosine monophosphate (AMP) or uridine monophosphate (UMP) to a protein, resulting in modifications known as AMPylation and UMPylation. This is Protein nucleotidyltransferase YdiU from Pseudomonas aeruginosa (strain LESB58).